The chain runs to 233 residues: MKLLNSLILLVLTCLVSSINTQFISIQKYDFSGNCKNSSDSASSFEASSESAAICMQNDLLSGIVTNEGVCLIFNEVPTTFIISTKGDYIVRSIYDINDNNCQGGIIENKAIEIDECFVECADDYHGSTYLFSTETSLNYPSNTFMEISYNGECDGQWKTSFNYLQYYIVNKCNVAHEIETHTFSVGCNSTSSWVSEYAGEVCTVEPTVTTSYPIVDNCGDLDNSNFIDYCNI.

Residues 1–21 (MKLLNSLILLVLTCLVSSINT) form the signal peptide. Asn37 and Asn189 each carry an N-linked (GlcNAc...) asparagine glycan.

The protein resides in the secreted. This Dictyostelium discoideum (Social amoeba) protein is Counting factor-associated protein A (cfaA).